Consider the following 358-residue polypeptide: Protein-glutamate methylesterase/protein-glutamine glutaminase 2 (358 aa).

The region spanning 8 to 125 is the Response regulatory domain; it reads RVLIVDDSAV…ARGLEGYAEE (118 aa). Asp59 is subject to 4-aspartylphosphate. Residues 157 to 352 form the CheB-type methylesterase domain; the sequence is PMPGSALRFR…LDRVAERLLA (196 aa). Active-site residues include Ser177, His203, and Asp299.

The protein belongs to the CheB family. Post-translationally, phosphorylated by CheA. Phosphorylation of the N-terminal regulatory domain activates the methylesterase activity.

The protein localises to the cytoplasm. It carries out the reaction [protein]-L-glutamate 5-O-methyl ester + H2O = L-glutamyl-[protein] + methanol + H(+). It catalyses the reaction L-glutaminyl-[protein] + H2O = L-glutamyl-[protein] + NH4(+). Involved in chemotaxis. Part of a chemotaxis signal transduction system that modulates chemotaxis in response to various stimuli. Catalyzes the demethylation of specific methylglutamate residues introduced into the chemoreceptors (methyl-accepting chemotaxis proteins or MCP) by CheR. Also mediates the irreversible deamidation of specific glutamine residues to glutamic acid. In Xanthomonas oryzae pv. oryzae (strain MAFF 311018), this protein is Protein-glutamate methylesterase/protein-glutamine glutaminase 2.